We begin with the raw amino-acid sequence, 500 residues long: Beta-glucosidase 28 (500 aa).

The N-terminal stretch at methionine 1–glycine 24 is a signal peptide. Glutamine 45 is a binding site for a beta-D-glucoside. A glycan (N-linked (GlcNAc...) asparagine) is linked at asparagine 111. A beta-D-glucoside contacts are provided by residues histidine 146 and asparagine 191–glutamate 192. Glutamate 192 acts as the Proton donor in catalysis. The cysteines at positions 211 and 219 are disulfide-linked. Tyrosine 337 provides a ligand contact to a beta-D-glucoside. N-linked (GlcNAc...) asparagine glycosylation is present at asparagine 362. Glutamate 408 is an a beta-D-glucoside binding site. Glutamate 408 acts as the Nucleophile in catalysis. Residues asparagine 409, asparagine 415, and asparagine 416 are each glycosylated (N-linked (GlcNAc...) asparagine). A beta-D-glucoside-binding positions include tryptophan 457, glutamate 464 to phenylalanine 465, and phenylalanine 473.

The protein belongs to the glycosyl hydrolase 1 family.

It carries out the reaction Hydrolysis of terminal, non-reducing beta-D-glucosyl residues with release of beta-D-glucose.. This chain is Beta-glucosidase 28 (BGLU28), found in Oryza sativa subsp. japonica (Rice).